The following is a 479-amino-acid chain: D-alanyl-D-alanine carboxypeptidase DacB (479 aa).

The first 26 residues, 1–26 (MKKLSSISTALGSFLLSVSFSLPTFA), serve as a signal peptide directing secretion. The Acyl-ester intermediate role is filled by Ser-69. The Proton acceptor role is filled by Lys-72. The active site involves Ser-310. Lys-420 contributes to the substrate binding site.

It belongs to the peptidase S13 family.

The protein localises to the periplasm. The catalysed reaction is Preferential cleavage: (Ac)2-L-Lys-D-Ala-|-D-Ala. Also transpeptidation of peptidyl-alanyl moieties that are N-acyl substituents of D-alanine.. It functions in the pathway cell wall biogenesis; peptidoglycan biosynthesis. Not involved in transpeptidation but exclusively catalyzes a DD-carboxypeptidase and DD-endopeptidase reaction. In Haemophilus influenzae (strain ATCC 51907 / DSM 11121 / KW20 / Rd), this protein is D-alanyl-D-alanine carboxypeptidase DacB (dacB).